The sequence spans 354 residues: MNILERAALTALHRMDPEKAHSLSLSALRSGLVPLPGPVTSSRLATDVGGLVLPNPVGLAAGYDKNAVALAALMRAGFGFLEVGAATPRPQPGNPQPRLFRLTEDRAAINRFGFNNDGAATICARLAMRPRGAVPVGLNLGANKDSPDRAADFAAVLAACGPHADFATVNVSSPNTERLRDLQGRQALTALLEGVMQVQAGFARPVPVFLKIAPDLSDADLAEIAEVALASGIAGIVATNTTLARDGLRSAHARETGGLSGAPLFERSTRVLARLSELTEGRLPLIGVGGVASAEEAYAKIRAGASAVQLYTAMVYQGIGLAARIARGLDALLLRDGFGSVAEAVGTGRADWLT.

FMN-binding positions include 61–65 and alanine 85; that span reads AGYDK. Residue lysine 65 coordinates substrate. 110-114 provides a ligand contact to substrate; sequence NRFGF. Residues asparagine 139 and asparagine 170 each contribute to the FMN site. A substrate-binding site is contributed by asparagine 170. Serine 173 serves as the catalytic Nucleophile. A substrate-binding site is contributed by asparagine 175. FMN contacts are provided by lysine 211 and threonine 239. 240-241 lines the substrate pocket; sequence NT. FMN is bound by residues glycine 261, glycine 290, and 311–312; that span reads YT.

This sequence belongs to the dihydroorotate dehydrogenase family. Type 2 subfamily. As to quaternary structure, monomer. It depends on FMN as a cofactor.

The protein resides in the cell membrane. The catalysed reaction is (S)-dihydroorotate + a quinone = orotate + a quinol. The protein operates within pyrimidine metabolism; UMP biosynthesis via de novo pathway; orotate from (S)-dihydroorotate (quinone route): step 1/1. Its function is as follows. Catalyzes the conversion of dihydroorotate to orotate with quinone as electron acceptor. The chain is Dihydroorotate dehydrogenase (quinone) from Cereibacter sphaeroides (strain KD131 / KCTC 12085) (Rhodobacter sphaeroides).